The sequence spans 86 residues: uncharacterized protein (86 aa).

An N-terminal signal peptide occupies residues 1–31 (MKQKLLLSGLAVSTVGITSYLLKDPSNRQKA). Positions 46–69 (PDMETFPVDKAGHPDPQDIEDNKM) are disordered. Residues 55–69 (KAGHPDPQDIEDNKM) show a composition bias toward basic and acidic residues.

This is an uncharacterized protein from Bacillus subtilis (strain 168).